We begin with the raw amino-acid sequence, 483 residues long: Putative inorganic phosphate cotransporter (483 aa).

7 helical membrane passes run 64–84, 90–110, 187–207, 292–312, 349–369, 383–403, and 420–440; these read YILS…GILA, LRFL…VPVA, IFYV…IFVY, LPYL…DWMI, ALTL…YSGF, FLMS…PIAA, and IVFF…NIFG. The tract at residues 447-483 is disordered; sequence WDNPSEDEQKPALESSSTTNPPRLSNGSSAPRAISSS. The segment covering 460-483 has biased composition (polar residues); sequence ESSSTTNPPRLSNGSSAPRAISSS.

Belongs to the major facilitator superfamily. Sodium/anion cotransporter family.

It is found in the membrane. Its function is as follows. May be an inorganic phosphate cotransporter. The chain is Putative inorganic phosphate cotransporter (Picot) from Drosophila ananassae (Fruit fly).